The chain runs to 65 residues: Small ribosomal subunit protein eS27 (65 aa).

Zn(2+) contacts are provided by Cys-21, Cys-24, Cys-40, and Cys-43. The segment at 21-43 (CRDCGNVQVVFARPSSTVTCNIC) adopts a C4-type zinc-finger fold.

This sequence belongs to the eukaryotic ribosomal protein eS27 family. Part of the 30S ribosomal subunit. Zn(2+) is required as a cofactor.

The chain is Small ribosomal subunit protein eS27 from Thermoplasma acidophilum (strain ATCC 25905 / DSM 1728 / JCM 9062 / NBRC 15155 / AMRC-C165).